The chain runs to 447 residues: Argininosuccinate synthase (447 aa).

ATP is bound by residues Ala17–Ser25 and Ala43. L-citrulline is bound at residue Tyr99. Residues Gly129 and Thr131 each contribute to the ATP site. Residues Thr131, Asn135, and Asp136 each contribute to the L-aspartate site. Position 135 (Asn135) interacts with L-citrulline. Residue Asp136 coordinates ATP. Arg139 and Ser192 together coordinate L-citrulline. Asp194 provides a ligand contact to ATP. Thr201, Glu203, and Glu280 together coordinate L-citrulline.

Belongs to the argininosuccinate synthase family. Type 2 subfamily. In terms of assembly, homotetramer.

Its subcellular location is the cytoplasm. It catalyses the reaction L-citrulline + L-aspartate + ATP = 2-(N(omega)-L-arginino)succinate + AMP + diphosphate + H(+). The protein operates within amino-acid biosynthesis; L-arginine biosynthesis; L-arginine from L-ornithine and carbamoyl phosphate: step 2/3. The sequence is that of Argininosuccinate synthase from Klebsiella pneumoniae subsp. pneumoniae (strain ATCC 700721 / MGH 78578).